We begin with the raw amino-acid sequence, 361 residues long: Mannonate dehydratase 1 (361 aa).

This sequence belongs to the mannonate dehydratase family. Fe(2+) is required as a cofactor. Requires Mn(2+) as cofactor.

It catalyses the reaction D-mannonate = 2-dehydro-3-deoxy-D-gluconate + H2O. The protein operates within carbohydrate metabolism; pentose and glucuronate interconversion. In terms of biological role, catalyzes the dehydration of D-mannonate. The sequence is that of Mannonate dehydratase 1 (uxuA1) from Halalkalibacterium halodurans (strain ATCC BAA-125 / DSM 18197 / FERM 7344 / JCM 9153 / C-125) (Bacillus halodurans).